A 248-amino-acid polypeptide reads, in one-letter code: Small ribosomal subunit protein uS2 (248 aa).

It belongs to the universal ribosomal protein uS2 family.

The protein is Small ribosomal subunit protein uS2 of Cupriavidus necator (strain ATCC 17699 / DSM 428 / KCTC 22496 / NCIMB 10442 / H16 / Stanier 337) (Ralstonia eutropha).